The chain runs to 503 residues: MEFSVKSGSPEKQRSACIVVGVFEPRRLSPIAEQLDKISDGYISALLRRGELEGKVGQTLLLHHVPNILSERILLIGCGKERELDERQYKQVIQKTINTLNDTGSMEAVCFLTELHVKGRNTYWKVRQAVETAKETLYTFDQLKSNKTEPRRPLRKMVFNVPTRRELTSGERAIQHGLAVASGIKAAKDLGNMPPNICNAAYLASQARQLADAFSTNIITRVIGEQQMKELGMHSYLAVGHGSQNESLMSVIEYKGNPNPDAKPIVLVGKGLTFDSGGISIKPAEGMDEMKYDMCGAATVYGVMRVVAELQLPLNVIGVLAGCENMPGGRAYRPGDILTTMSGQTVEVLNTDAEGRLVLCDALTYVERFEPEVVIDIATLTGACVVALGHHITGLMSNHNPLAHELIGASEQAGDRAWRLPLGDEFYEQLDSNFADMANIGGRAGGAITAGCFLSRFTRKYSWAHLDIAGTAWRSGKNKGATGRPVALLSQFLLNRAGLNGDD.

Residues Lys-270 and Asp-275 each coordinate Mn(2+). Lys-282 is a catalytic residue. Mn(2+) is bound by residues Asp-293, Asp-352, and Glu-354. Arg-356 is an active-site residue.

It belongs to the peptidase M17 family. Mn(2+) serves as cofactor.

It is found in the cytoplasm. It catalyses the reaction Release of an N-terminal amino acid, Xaa-|-Yaa-, in which Xaa is preferably Leu, but may be other amino acids including Pro although not Arg or Lys, and Yaa may be Pro. Amino acid amides and methyl esters are also readily hydrolyzed, but rates on arylamides are exceedingly low.. The enzyme catalyses Release of an N-terminal amino acid, preferentially leucine, but not glutamic or aspartic acids.. Functionally, presumably involved in the processing and regular turnover of intracellular proteins. Catalyzes the removal of unsubstituted N-terminal amino acids from various peptides. This is Probable cytosol aminopeptidase from Yersinia enterocolitica serotype O:8 / biotype 1B (strain NCTC 13174 / 8081).